The sequence spans 118 residues: Crustacean hyperglycemic hormones 2 (118 aa).

The signal sequence occupies residues 1–22 (MTAFRLVAVALVVVVACSTTWA). Intrachain disulfides connect cysteine 51–cysteine 87, cysteine 67–cysteine 83, and cysteine 70–cysteine 96. Residue valine 116 is modified to Valine amide.

It belongs to the arthropod CHH/MIH/GIH/VIH hormone family.

The protein localises to the secreted. In terms of biological role, hormone found in the sinus gland of isopods and decapods which controls the blood sugar level. Has a secretagogue action over the amylase released from the midgut gland. May act as a stress hormone and may be involved in the control of molting and reproduction. This chain is Crustacean hyperglycemic hormones 2 (CHH2), found in Penaeus monodon (Giant tiger prawn).